Here is a 302-residue protein sequence, read N- to C-terminus: Methionyl-tRNA formyltransferase (302 aa).

106–109 (SVLP) is a (6S)-5,6,7,8-tetrahydrofolate binding site.

This sequence belongs to the Fmt family.

It catalyses the reaction L-methionyl-tRNA(fMet) + (6R)-10-formyltetrahydrofolate = N-formyl-L-methionyl-tRNA(fMet) + (6S)-5,6,7,8-tetrahydrofolate + H(+). Its function is as follows. Attaches a formyl group to the free amino group of methionyl-tRNA(fMet). The formyl group appears to play a dual role in the initiator identity of N-formylmethionyl-tRNA by promoting its recognition by IF2 and preventing the misappropriation of this tRNA by the elongation apparatus. The sequence is that of Methionyl-tRNA formyltransferase from Hydrogenobaculum sp. (strain Y04AAS1).